Here is a 359-residue protein sequence, read N- to C-terminus: Peptide chain release factor 1 (359 aa).

N5-methylglutamine is present on Q236.

It belongs to the prokaryotic/mitochondrial release factor family. Methylated by PrmC. Methylation increases the termination efficiency of RF1.

Its subcellular location is the cytoplasm. Peptide chain release factor 1 directs the termination of translation in response to the peptide chain termination codons UAG and UAA. The chain is Peptide chain release factor 1 from Streptococcus pyogenes serotype M18 (strain MGAS8232).